Reading from the N-terminus, the 75-residue chain is MVIIPGVRCLSLLFLRRRCPLHIISAFTLLAINALILGHTISPVDLSFTICGYEIKSIFDSETDTIVKFNDIMSQ.

This is an uncharacterized protein from Vaccinia virus (strain Copenhagen) (VACV).